We begin with the raw amino-acid sequence, 394 residues long: Elongation factor Tu (394 aa).

The tr-type G domain occupies 10-205; it reads KPHMNVGTIG…SMDNYFDLPE (196 aa). Positions 19 to 26 are G1; that stretch reads GHVDHGKT. 19–26 lines the GTP pocket; sequence GHVDHGKT. Thr-26 serves as a coordination point for Mg(2+). Positions 61–65 are G2; it reads GITIN. Residues 82–85 form a G3 region; it reads DCPG. GTP contacts are provided by residues 82 to 86 and 137 to 140; these read DCPGH and NKLD. The G4 stretch occupies residues 137–140; that stretch reads NKLD. The tract at residues 173–175 is G5; sequence SAF.

It belongs to the TRAFAC class translation factor GTPase superfamily. Classic translation factor GTPase family. EF-Tu/EF-1A subfamily. Monomer.

The protein localises to the cytoplasm. It catalyses the reaction GTP + H2O = GDP + phosphate + H(+). In terms of biological role, GTP hydrolase that promotes the GTP-dependent binding of aminoacyl-tRNA to the A-site of ribosomes during protein biosynthesis. This is Elongation factor Tu from Borreliella afzelii (strain PKo) (Borrelia afzelii).